Reading from the N-terminus, the 357-residue chain is Anthranilate phosphoribosyltransferase (357 aa).

5-phospho-alpha-D-ribose 1-diphosphate contacts are provided by residues Gly94, 97–98 (GD), Thr102, 104–107 (NLST), 122–130 (KHGNRAASS), and Gly134. Gly94 provides a ligand contact to anthranilate. Residue Ser106 coordinates Mg(2+). Asn125 contributes to the anthranilate binding site. Arg180 is a binding site for anthranilate. 2 residues coordinate Mg(2+): Asp238 and Glu239.

This sequence belongs to the anthranilate phosphoribosyltransferase family. As to quaternary structure, homodimer. Mg(2+) serves as cofactor.

It carries out the reaction N-(5-phospho-beta-D-ribosyl)anthranilate + diphosphate = 5-phospho-alpha-D-ribose 1-diphosphate + anthranilate. The protein operates within amino-acid biosynthesis; L-tryptophan biosynthesis; L-tryptophan from chorismate: step 2/5. Catalyzes the transfer of the phosphoribosyl group of 5-phosphorylribose-1-pyrophosphate (PRPP) to anthranilate to yield N-(5'-phosphoribosyl)-anthranilate (PRA). This chain is Anthranilate phosphoribosyltransferase, found in Mycobacterium sp. (strain KMS).